The chain runs to 501 residues: CUGBP Elav-like family member 1 (501 aa).

Residues N2–R196 form a binds strongly to URE region. RRM domains lie at I16–S99 and R108–T188. Composition is skewed to low complexity over residues P274–G298 and S312–N323. Residues P274–N323 are disordered. The tract at residues L397 to Y501 is binds strongly to URE. Positions A416–S494 constitute an RRM 3 domain.

The protein belongs to the CELF/BRUNOL family.

Its subcellular location is the nucleus. The protein resides in the cytoplasm. RNA-binding protein implicated in the regulation of several post-transcriptional events. May be involved in mRNA translation activation and stability. Involved in the regulation of muscle-specific splicing of alpha actinin pre-mRNAs via the binding to the UR-repeat element (URE) at the branch point of the non-muscle (NM) exon. The sequence is that of CUGBP Elav-like family member 1 (celf1) from Danio rerio (Zebrafish).